An 867-amino-acid chain; its full sequence is MGNRGMEDLIPLVNRLQDAFSAIGQNADLDLPQIAVVGGQSAGKSSVLENFVGRDFLPRGSGIVTRRPLVLQLVNSTTEYAEFLHCKGKKFTDFEEVRLEIEAETDRVTGTNKGISPVPINLRVYSPHVLNLTLVDLPGMTKVPVGDQPPDIEFQIRDMLMQFVTKENCLILAVSPANSDLANSDALKIAKEVDPQGQRTIGVITKLDLMDEGTDARDVLENKLLPLRRGYIGVVNRSQKDIDGKKDITAALAAERKFFLSHPSYRHLADRMGTPYLQKVLNQQLTNHIRDTLPGLRNKLQSQLLSIEKEVDEYKNFRPDDPARKTKALLQMVQQFAVDFEKRIEGSGDQIDTYELSGGARINRIFHERFPFELVKMEFDEKELRREISYAIKNIHGIRTGLFTPDMAFETIVKKQVKKIREPCLKCVDMVISELISTVRQCTKKLQQYPRLREEMERIVTTHIREREGRTKEQVMLLIDIELAYMNTNHEDFIGFANAQQRSNQMNKKKTSGNQDEILVIRKGWLTINNIGIMKGGSKEYWFVLTAENLSWYKDDEEKEKKYMLSVDNLKLRDVEKGFMSSKHIFALFNTEQRNVYKDYRQLELACETQEEVDSWKASFLRAGVYPERVGDKEKASETEENGSDSFMHSMDPQLERQVETIRNLVDSYMAIVNKTVRDLMPKTIMHLMINNTKEFIFSELLANLYSCGDQNTLMEESAEQAQRRDEMLRMYHALKEALSIIGDINTTTVSTPMPPPVDDSWLQVQSVPAGRRSPTSSPTPQRRAPAVPPARPGSRGPAPGPPPAGSALGGAPPVPSRPGASPDPFGPPPQVPSRPNRAPPGVPSLGAWRLNSPQGKHENRAGKARL.

One can recognise a Dynamin-type G domain in the interval 28–294 (DLDLPQIAVV…LTNHIRDTLP (267 aa)). Positions 38–45 (GGQSAGKS) are G1 motif. Residues Ser41, Gly43, Lys44, Ser45, Ser46, Arg59, and Gly60 each contribute to the GDP site. The tract at residues 64–66 (VTR) is G2 motif. Residue Tyr80 is modified to Phosphotyrosine. Tyr125 is subject to 3'-nitrotyrosine; alternate. Tyr125 is modified (phosphotyrosine; alternate). The G3 motif stretch occupies residues 136 to 139 (DLPG). A G4 motif region spans residues 205–208 (TKLD). 6 residues coordinate GDP: Lys206, Asp208, Asp211, Asn236, Arg237, and Gln239. Residues 235–238 (VNRS) form a G5 motif region. Phosphoserine is present on residues Ser306 and Ser347. Tyr354 carries the post-translational modification Phosphotyrosine. Ser512 is subject to Phosphoserine. Residues 515–625 (QDEILVIRKG…WKASFLRAGV (111 aa)) enclose the PH domain. The GED domain occupies 659-750 (VETIRNLVDS…IIGDINTTTV (92 aa)). The segment at 767–867 (SVPAGRRSPT…HENRAGKARL (101 aa)) is disordered. Phosphoserine occurs at positions 774 and 778. Arg796 bears the Omega-N-methylarginine mark. Ser822 is subject to Phosphoserine. The span at 825 to 843 (PFGPPPQVPSRPNRAPPGV) shows a compositional bias: pro residues. Residues Gly847, Leu851, and Lys857 each carry the phosphoserine modification. Basic and acidic residues predominate over residues 856-867 (GKHENRAGKARL).

Belongs to the TRAFAC class dynamin-like GTPase superfamily. Dynamin/Fzo/YdjA family. Homodimer; homodimerization is mediated by the dynamin-type G domain which promotes assembly-stimulated GTPase activity. Homo-tetramer formed from two dimers in the absence of lipid. Oligomerizes into a helical polymer that self-assembles around the vesicle membrane, when associated to the menbrane through lipid binding. Interacts (via C-terminal proline-rich domain (PRD)) with SNX9 (via SH3 domain); this interaction allows regulation of DNM1 self-assembly during late stages of endocytic vesicle formation and supports DNM1's early functions in accelerating clathrin-coated pits (CCPs) maturation in non neuronals cell. Interacts (via C-terminal proline-rich domain (PRD)) with MYO1E (via SH3 domain); this interaction regulates receptor-mediated endocytosis. Interacts with SNX33 (via SH3 domain); this interaction decreases DNM1-dependent endocytosis. Interacts with DIAPH1. Interacts with GRB2 (via SH3 domain); this interaction mediates disassembly of DNM1 polymers, therefore modulates self-assembly. Forms a complex with BIN1 (via SH3 domain) and SH3GL2 (via SH3 domain). Forms a complex with SH3GL2 (via SH3 domain) and AMPH (via SH3 domain). Forms a complex with SH3GL2 (via SH3 domain) and SYNJ1. Interacts (via C-terminal proline-rich domain (PRD)) with SYT1; this interaction facilitates vesicle fission during clathrin-mediated endocytosis (CME). Interacts (via C-terminal proline-rich domain (PRD)) with PLCG1 (via SH3 domain); this interaction stimulates the release of GDP from DNM1 and enhances DNM1-dependent endocytosis. Interacts with SNPH; this interaction inhibits the binding of DNM1 to AMPH and DNM1-receptor-mediated endocytosis. Interacts with CAV1. Interacts with SH3GLB1 (via SH3 domain). Interacts with PACSIN1 (via SH3 domain), PACSIN2 (via SH3 domain) and PACSIN3 (via SH3 domain). Interacts with UNC119; this interaction decreases DNM1's GTPase activity and affects DNM1's interaction with AMPH. Interacts with AMPH. Interacts (GTP-bound form) with DNAJC6; this interaction allows clathrin-coated vesicle (CCV) formation at the plasma membrane. Post-translationally, phosphorylation at Ser-774 by GSK3B/GSK3-beta leads to inactivation of receptor-mediated endocytosis in non-neuronal cells. Dephosphorylation at Ser-774, through the EGFR downstream signaling, leads to activation and regulates early stages of clathrin-mediated endocytosis (CME). Phosphorylated on Tyr in response to EGF stimulation in cells expressing truncated EGFR. Phosphorylated by CDK5 leading to synaptic vesicle endocytosis (SVE) activation. In terms of tissue distribution, expressed exclusively in the brain.

It localises to the cell membrane. The protein localises to the membrane. The protein resides in the clathrin-coated pit. Its subcellular location is the cytoplasmic vesicle. It is found in the presynapse. It localises to the secretory vesicle. The protein localises to the chromaffin granule. The catalysed reaction is GTP + H2O = GDP + phosphate + H(+). In terms of biological role, catalyzes the hydrolysis of GTP and utilizes this energy to mediate vesicle scission and participates in many forms of endocytosis, such as clathrin-mediated endocytosis or synaptic vesicle endocytosis as well as rapid endocytosis (RE). Associates to the membrane, through lipid binding, and self-assembles into rings and stacks of interconnected rings through oligomerization to form a helical polymer around the vesicle membrane leading to constriction of invaginated coated pits around their necks. Self-assembly of the helical polymer induces membrane tubules narrowing until the polymer reaches a length sufficient to trigger GTP hydrolysis. Depending on the curvature imposed on the tubules, membrane detachment from the helical polymer upon GTP hydrolysis can cause spontaneous hemifission followed by complete fission. May play a role in regulating early stages of clathrin-mediated endocytosis in non-neuronal cells through its activation by dephosphorylation via the signaling downstream of EGFR. Controls vesicle size at a step before fission, during formation of membrane pits, at hippocampal synapses. Controls plastic adaptation of the synaptic vesicle recycling machinery to high levels of activity. Mediates rapid endocytosis (RE), a Ca(2+)-dependent and clathrin- and K(+)-independent process in chromaffin cells. Microtubule-associated force-producing protein involved in producing microtubule bundles and able to bind and hydrolyze GTP. Through its interaction with DNAJC6, acts during the early steps of clathrin-coated vesicle (CCV) formation. The protein is Dynamin-1 of Mus musculus (Mouse).